The following is a 378-amino-acid chain: Zinc finger protein DPF3 (378 aa).

Residue Lys-99 forms a Glycyl lysine isopeptide (Lys-Gly) (interchain with G-Cter in SUMO2) linkage. The disordered stretch occupies residues 145–193 (VLENDENVEEGNEEEDLEEDIPKRKNRTRGRARGSAGGRRRHDAASQED). Over residues 148–163 (NDENVEEGNEEEDLEE) the composition is skewed to acidic residues. Positions 168–186 (RKNRTRGRARGSAGGRRRH) are enriched in basic residues. The C2H2-type zinc finger occupies 198–221 (YVCDICGKRYKNRPGLSYHYAHTH). The tract at residues 225–254 (EEGDEAQDQETRSPPNHRNENHRPQKGPDG) is disordered. 2 PHD-type zinc fingers span residues 259–319 (NNYC…CKSC) and 316–366 (CKSC…CWEL). The interaction with HDGFL2 stretch occupies residues 317–332 (KSCILCGTSENDDQLL). Gly-323 bears the Phosphoserine mark.

The protein belongs to the requiem/DPF family. Component of the BAF complex, which includes at least actin (ACTB), ARID1A, ARID1B/BAF250, SMARCA2, SMARCA4/BRG1/BAF190A, ACTL6A/BAF53, ACTL6B/BAF53B, SMARCE1/BAF57, SMARCC1/BAF155, SMARCC2/BAF170, SMARCB1/SNF5/INI1, and one or more of SMARCD1/BAF60A, SMARCD2/BAF60B, or SMARCD3/BAF60C. In muscle cells, the BAF complex also contains DPF3. Interacts with acetylated histones H3 and H4. Component of neuron-specific chromatin remodeling complex (nBAF complex) composed of at least, ARID1A/BAF250A or ARID1B/BAF250B, SMARCD1/BAF60A, SMARCD3/BAF60C, SMARCA2/BRM/BAF190B, SMARCA4/BRG1/BAF190A, SMARCB1/BAF47, SMARCC1/BAF155, SMARCE1/BAF57, SMARCC2/BAF170, DPF1/BAF45B, DPF3/BAF45C, ACTL6B/BAF53B and actin. As to quaternary structure, interacts with HDGFL2, SMARCA4/BRG1/BAF190A, SMARCC1/BAF155 and SMARCD1/BAF60A. Phosphorylation at Ser-323 enhances its interaction with HDGFL2.

The protein localises to the nucleus. Functionally, belongs to the neuron-specific chromatin remodeling complex (nBAF complex). During neural development a switch from a stem/progenitor to a post-mitotic chromatin remodeling mechanism occurs as neurons exit the cell cycle and become committed to their adult state. The transition from proliferating neural stem/progenitor cells to post-mitotic neurons requires a switch in subunit composition of the npBAF and nBAF complexes. As neural progenitors exit mitosis and differentiate into neurons, npBAF complexes which contain ACTL6A/BAF53A and PHF10/BAF45A, are exchanged for homologous alternative ACTL6B/BAF53B and DPF1/BAF45B or DPF3/BAF45C subunits in neuron-specific complexes (nBAF). The npBAF complex is essential for the self-renewal/proliferative capacity of the multipotent neural stem cells. The nBAF complex along with CREST plays a role regulating the activity of genes essential for dendrite growth. Muscle-specific component of the BAF complex, a multiprotein complex involved in transcriptional activation and repression of select genes by chromatin remodeling (alteration of DNA-nucleosome topology). Specifically binds acetylated lysines on histone 3 and 4 (H3K14ac, H3K9ac, H4K5ac, H4K8ac, H4K12ac, H4K16ac). In the complex, it acts as a tissue-specific anchor between histone acetylations and methylations and chromatin remodeling. It thereby probably plays an essential role in heart and skeletal muscle development. Acts as a regulator of myogenesis in cooperation with HDGFL2. Mediates the interaction of HDGFL2 with the BAF complex. HDGFL2-DPF3a activate myogenic genes by increasing chromatin accessibility through recruitment of SMARCA4/BRG1/BAF190A (ATPase subunit of the BAF complex) to myogenic gene promoters. In Homo sapiens (Human), this protein is Zinc finger protein DPF3 (DPF3).